We begin with the raw amino-acid sequence, 217 residues long: MSIGILGKKLGMSQLFDDKGNAVPVTLIEAGPCRVTQLKTNALDGYTAIQIGYGVSKEKHISKPEKGHLLKSGEELLKHLKEYRVEETSSYEIGNQITVKNFEVGQKVDISGKSMGRGFSGYQKRHGFSRGPMSHGSKNHRAPGSTGAGTTPGRIYPGKRMAGRYGGKQITTKGLLVLKIDDQKNLLVVKGSVPGKPGSIVNIKPNNVVGKKGGEKS.

Positions 129–162 (SRGPMSHGSKNHRAPGSTGAGTTPGRIYPGKRMA) are disordered. Over residues 142–153 (APGSTGAGTTPG) the composition is skewed to low complexity.

It belongs to the universal ribosomal protein uL3 family. As to quaternary structure, part of the 50S ribosomal subunit. Forms a cluster with proteins L14 and L19.

Functionally, one of the primary rRNA binding proteins, it binds directly near the 3'-end of the 23S rRNA, where it nucleates assembly of the 50S subunit. This chain is Large ribosomal subunit protein uL3, found in Prochlorococcus marinus (strain MIT 9215).